The primary structure comprises 1196 residues: Beta/alpha-amylase (1196 aa).

Positions 1 to 35 (MTLYRSLWKKGCMLLLSLVLSLTAFIGSPSNTASA) are cleaved as a signal peptide. The tract at residues 36–454 (AVADDFQASV…IISKAKPDNN (419 aa)) is beta-amylase. Asp-76 is a substrate binding site. Ca(2+) contacts are provided by Glu-83 and Asp-87. Residues His-116 and Asp-124 each contribute to the substrate site. A disulfide bridge connects residues Cys-118 and Cys-126. Glu-170 provides a ligand contact to Ca(2+). The active-site Proton donor is the Glu-198. Substrate contacts are provided by Lys-314, His-319, and Thr-357. The active-site Proton acceptor is the Glu-394. Substrate is bound by residues 395-396 (NA) and Arg-423. 2 repeats span residues 455–558 (GGTG…APAG) and 565–668 (GGTT…APSG). The segment covering 544 to 553 (NSGNAGTITS) has biased composition (polar residues). Residues 544-566 (NSGNAGTITSGAPAGANPGDGGG) form a disordered region. An alpha-amylase region spans residues 669 to 1196 (SVLSVVTSTY…APKEVKVFTK (528 aa)).

This sequence in the N-terminal section; belongs to the glycosyl hydrolase 14 family. In the C-terminal section; belongs to the glycosyl hydrolase 13 family. Ca(2+) is required as a cofactor.

Its subcellular location is the secreted. The enzyme catalyses Hydrolysis of (1-&gt;4)-alpha-D-glucosidic linkages in polysaccharides so as to remove successive maltose units from the non-reducing ends of the chains.. It catalyses the reaction Endohydrolysis of (1-&gt;4)-alpha-D-glucosidic linkages in polysaccharides containing three or more (1-&gt;4)-alpha-linked D-glucose units.. In terms of biological role, the precursor protein is proteolytically cleaved to produce multiform beta-amylases and a 48 kDa alpha-amylase after secretion. The sequence is that of Beta/alpha-amylase from Paenibacillus polymyxa (Bacillus polymyxa).